Here is a 417-residue protein sequence, read N- to C-terminus: Hydrogen cyanide synthase subunit HcnC (417 aa).

The first 18 residues, Met1–Ser18, serve as a signal peptide directing secretion. Residue Ile7–Tyr21 coordinates FAD. Cys19 carries N-palmitoyl cysteine lipidation. Cys19 carries the S-diacylglycerol cysteine lipid modification. Residues Ser46–Phe66 form a helical membrane-spanning segment.

It belongs to the FAD-dependent glycerol-3-phosphate dehydrogenase family. As to quaternary structure, heterotrimer of HcnA, HcnB and HcnC. Requires FAD as cofactor.

It is found in the cell membrane. It catalyses the reaction glycine + 2 A = hydrogen cyanide + 2 AH2 + CO2. With respect to regulation, oxygen is necessary for cyanogenesis. Activated by succinate, glycine methyl ester, glucose and D,L-methionine in addition to glycine. Phenazine methosulfate, methylene blue, 2,6-dichlorophenolindophenol (DCIP) and ferricyanide can replace oxygen for the reaction. Inhibited by pyrrolnitrin and acriflavine at 1 mM concentration. Functionally, a three-component membrane-bound flavoenzyme that catalyzes the formation of hydrogen cyanide, a secondary metabolite, by transfer of electrons to a cyanide-resistant branch of the aerobic respiratory chain. In Pseudomonas aeruginosa (strain ATCC 15692 / DSM 22644 / CIP 104116 / JCM 14847 / LMG 12228 / 1C / PRS 101 / PAO1), this protein is Hydrogen cyanide synthase subunit HcnC.